The sequence spans 295 residues: Elongation factor Ts (295 aa).

Residues 79 to 82 are involved in Mg(2+) ion dislocation from EF-Tu; that stretch reads TDFV.

The protein belongs to the EF-Ts family.

It localises to the cytoplasm. Its function is as follows. Associates with the EF-Tu.GDP complex and induces the exchange of GDP to GTP. It remains bound to the aminoacyl-tRNA.EF-Tu.GTP complex up to the GTP hydrolysis stage on the ribosome. This is Elongation factor Ts from Bacillus mycoides (strain KBAB4) (Bacillus weihenstephanensis).